We begin with the raw amino-acid sequence, 414 residues long: Gamma-glutamyl phosphate reductase (414 aa).

This sequence belongs to the gamma-glutamyl phosphate reductase family.

Its subcellular location is the cytoplasm. It catalyses the reaction L-glutamate 5-semialdehyde + phosphate + NADP(+) = L-glutamyl 5-phosphate + NADPH + H(+). It participates in amino-acid biosynthesis; L-proline biosynthesis; L-glutamate 5-semialdehyde from L-glutamate: step 2/2. Functionally, catalyzes the NADPH-dependent reduction of L-glutamate 5-phosphate into L-glutamate 5-semialdehyde and phosphate. The product spontaneously undergoes cyclization to form 1-pyrroline-5-carboxylate. The polypeptide is Gamma-glutamyl phosphate reductase (Xanthomonas campestris pv. campestris (strain 8004)).